The sequence spans 206 residues: Adenine phosphoribosyltransferase (206 aa).

It belongs to the purine/pyrimidine phosphoribosyltransferase family. Homodimer.

The protein resides in the cytoplasm. It carries out the reaction AMP + diphosphate = 5-phospho-alpha-D-ribose 1-diphosphate + adenine. It functions in the pathway purine metabolism; AMP biosynthesis via salvage pathway; AMP from adenine: step 1/1. Catalyzes a salvage reaction resulting in the formation of AMP, that is energically less costly than de novo synthesis. The sequence is that of Adenine phosphoribosyltransferase from Burkholderia mallei (strain NCTC 10229).